Reading from the N-terminus, the 513-residue chain is Histidine ammonia-lyase (513 aa).

A cross-link (5-imidazolinone (Ala-Gly)) is located at residues 143-145 (ASG). At serine 144 the chain carries 2,3-didehydroalanine (Ser).

The protein belongs to the PAL/histidase family. Post-translationally, contains an active site 4-methylidene-imidazol-5-one (MIO), which is formed autocatalytically by cyclization and dehydration of residues Ala-Ser-Gly.

The protein localises to the cytoplasm. The enzyme catalyses L-histidine = trans-urocanate + NH4(+). Its pathway is amino-acid degradation; L-histidine degradation into L-glutamate; N-formimidoyl-L-glutamate from L-histidine: step 1/3. In Paracoccus denitrificans (strain Pd 1222), this protein is Histidine ammonia-lyase.